Reading from the N-terminus, the 195-residue chain is Cell division protein SepF (195 aa).

The tract at residues 32–54 (RYSKTNSSETLAPEEEEPIRNRR) is disordered.

It belongs to the SepF family. Homodimer. Interacts with FtsZ.

The protein resides in the cytoplasm. Its function is as follows. Cell division protein that is part of the divisome complex and is recruited early to the Z-ring. Probably stimulates Z-ring formation, perhaps through the cross-linking of FtsZ protofilaments. Its function overlaps with FtsA. The protein is Cell division protein SepF of Gloeothece citriformis (strain PCC 7424) (Cyanothece sp. (strain PCC 7424)).